Consider the following 2486-residue polypeptide: Nonribosomal peptide synthetase nanA (2486 aa).

The interval 231 to 637 (FSARQPLSPA…GRRGTQVKLR (407 aa)) is adenylation 1. The 75-residue stretch at 786-860 (TDIELKVHAL…DLARSAKETS (75 aa)) folds into the Carrier 1 domain. Ser820 is modified (O-(pantetheine 4'-phosphoryl)serine). Residues 902 to 1314 (EDAYPCTPLQ…LKSVPRVSSQ (413 aa)) are condensation 1. Residues 1339–1735 (RAQARKTPLA…GRIGDQMKIR (397 aa)) are adenylation 2. Carrier domains are found at residues 1872-1948 (PPST…SSAS) and 2404-2480 (SSSE…QTQA). 2 positions are modified to O-(pantetheine 4'-phosphoryl)serine: Ser1909 and Ser2441. Residues 2404-2480 (SSSETIVEPL…KLARLLQTQA (77 aa)) are condensation 2.

It belongs to the NRP synthetase family.

The protein operates within secondary metabolite biosynthesis. Its function is as follows. Nonribosomal peptide synthetase; part of the gene cluster that mediates the biosynthesis of the benzazepine alkaloid nanangelenin A which contains an unprecedented 3,4-dihydro-1-benzazepine-2,5-dione-N-prenyl-N-acetoxy-anthranilamide scaffold. The first step of nanangelenin biosynthesis is catalyzed by the indoleamine 2,3-dioxygenase nanC which produces N-formyl-kynurenine through the catabolism of tryptophan. The two-module NRPS nanA then utilizes anthranilate (Ant) and L-kynurenine (L-Kyn) to assemble the dipeptide product nanangelenin B. The first adenylation domain of nanA (A1) loads anthranilate onto the T1 domain, while A2 loads kynurenine, generated through spontaneous nonenzymatic deformylation of the nanC-supplied N-formyl-kynurenine. The peptide bond formation between the tethered amino acids is catalyzed by the first condensation domain (C1) between anthranilate's carbonyl carbon and kynurenine's aliphatic primary amine. The second C domain (C2) catalyzes the final cyclization event between the aromatic amine of kynurenine and the tethered carbonyl carbon, yielding nanangelenin B. The terminal T3 domain enhances the catalytic efficiency of C2, suggesting the T2-tethered Ant-L-Kyn is transferred to T3 prior to cyclization by C2. Once released from nanA, nanangelenin B is then prenylated by the prenyltransferase nanD to form nanangelenin C. Nanangelenin C is then N-hydroxylated by the FAD-dependent monooxygenase nanF and further acetylated by the acetyltransferase nanB to yield nanangelenin F. Finally, the N-methyltransferase nanE methylates the amide nitrogen of 1-benzazepine to convert nanangelenin F into nanangelenin A. NanE is also able to methylate most of the intermediates of the pathway such as nanangelenin B and nanangelenin C to produce nanangelenin D and nanangelenin E, respectively. This Aspergillus nanangensis protein is Nonribosomal peptide synthetase nanA.